The sequence spans 684 residues: UvrABC system protein C (684 aa).

The 80-residue stretch at 16-95 folds into the GIY-YIG domain; sequence TDPGVYKFRD…IKRFDPRFNV (80 aa). Residues 208-243 enclose the UVR domain; it reads APVRKRVTQRMEEAAENLEFELAARLRDDLGAIDKL. The span at 332–352 shows a compositional bias: basic and acidic residues; it reads EAAEDAKLERRGVDQESHAEP. The segment at 332–357 is disordered; that stretch reads EAAEDAKLERRGVDQESHAEPRQGNA.

This sequence belongs to the UvrC family. As to quaternary structure, interacts with UvrB in an incision complex.

The protein localises to the cytoplasm. Its function is as follows. The UvrABC repair system catalyzes the recognition and processing of DNA lesions. UvrC both incises the 5' and 3' sides of the lesion. The N-terminal half is responsible for the 3' incision and the C-terminal half is responsible for the 5' incision. This is UvrABC system protein C from Corynebacterium aurimucosum (strain ATCC 700975 / DSM 44827 / CIP 107346 / CN-1) (Corynebacterium nigricans).